Reading from the N-terminus, the 391-residue chain is Transposase for insertion sequence element IS905 (391 aa).

It belongs to the transposase mutator family.

Its function is as follows. Required for the transposition of the insertion element. The sequence is that of Transposase for insertion sequence element IS905 (tra905) from Lactococcus lactis subsp. lactis (strain IL1403) (Streptococcus lactis).